The following is a 95-amino-acid chain: Protein TusB (95 aa).

This sequence belongs to the DsrH/TusB family. As to quaternary structure, heterohexamer, formed by a dimer of trimers. The hexameric TusBCD complex contains 2 copies each of TusB, TusC and TusD. The TusBCD complex interacts with TusE.

It localises to the cytoplasm. Its function is as follows. Part of a sulfur-relay system required for 2-thiolation of 5-methylaminomethyl-2-thiouridine (mnm(5)s(2)U) at tRNA wobble positions. This Salmonella agona (strain SL483) protein is Protein TusB.